We begin with the raw amino-acid sequence, 513 residues long: Maturase K (513 aa).

Belongs to the intron maturase 2 family. MatK subfamily.

It localises to the plastid. The protein resides in the chloroplast. In terms of biological role, usually encoded in the trnK tRNA gene intron. Probably assists in splicing its own and other chloroplast group II introns. The protein is Maturase K of Panicum capillare (Witchgrass).